The primary structure comprises 380 residues: Crotonobetainyl-CoA reductase (380 aa).

The protein belongs to the acyl-CoA dehydrogenase family. In terms of assembly, homotetramer. It depends on FAD as a cofactor.

It localises to the cytoplasm. The catalysed reaction is 4-(trimethylamino)butanoyl-CoA + oxidized [electron-transfer flavoprotein] + H(+) = crotonobetainyl-CoA + reduced [electron-transfer flavoprotein]. Its pathway is amine and polyamine metabolism; carnitine metabolism. In terms of biological role, catalyzes the reduction of crotonobetainyl-CoA to gamma-butyrobetainyl-CoA. The polypeptide is Crotonobetainyl-CoA reductase (Escherichia coli (strain UTI89 / UPEC)).